A 413-amino-acid chain; its full sequence is Probable glucan 1,3-beta-glucosidase ARB_04467 (413 aa).

The first 17 residues, 1–17 (MKFGSLLGLSLVGLSVA), serve as a signal peptide directing secretion. Substrate is bound by residues Glu-46, Glu-202, and Tyr-262. Glu-202 acts as the Proton donor in catalysis. Cys-282 and Cys-412 are oxidised to a cystine. Glu-300 (nucleophile) is an active-site residue.

It belongs to the glycosyl hydrolase 5 (cellulase A) family. In terms of assembly, monomer.

The protein localises to the secreted. It localises to the cell wall. It carries out the reaction Successive hydrolysis of beta-D-glucose units from the non-reducing ends of (1-&gt;3)-beta-D-glucans, releasing alpha-glucose.. Its function is as follows. Major glucan 1,3-beta-glucosidase required for cell wall integrity. Beta-glucanases participate in the metabolism of beta-glucan, the main structural component of the cell wall. Can also function biosynthetically as a transglycosylase. Functions to deliver glucan from the cell to the extracellular matrix. Involved in cell-substrate and cell-cell adhesion. The protein is Probable glucan 1,3-beta-glucosidase ARB_04467 of Arthroderma benhamiae (strain ATCC MYA-4681 / CBS 112371) (Trichophyton mentagrophytes).